Consider the following 390-residue polypeptide: Mannitol-1-phosphate 5-dehydrogenase (390 aa).

7-18 (AVHFGGGNIGRG) serves as a coordination point for NAD(+). Lys216 is a catalytic residue.

Belongs to the mannitol dehydrogenase family. Monomer.

It carries out the reaction D-mannitol 1-phosphate + NAD(+) = beta-D-fructose 6-phosphate + NADH + H(+). In terms of biological role, catalyzes the NAD(H)-dependent interconversion of D-fructose 6-phosphate and D-mannitol 1-phosphate in the mannitol metabolic pathway. Required for the process of sporulation on senescing leaf material. The polypeptide is Mannitol-1-phosphate 5-dehydrogenase (mpd1) (Phaeosphaeria nodorum (strain SN15 / ATCC MYA-4574 / FGSC 10173) (Glume blotch fungus)).